The sequence spans 171 residues: MQCPHCQHTDSRVLESRSSENGQSIRRRRECLQCKYRFTTYERIEFVPITVIKKDGKRESFDRCKLLRGIVRACEKTGIPPSRLEAIVNDIESRLQQDSKREVTSQEIGQLVLEYLRQESEVAYVRFASVYGNFQGIRDFIAALALLQSSEIERAHPSWSQVEEASVITSS.

The interval 1 to 21 (MQCPHCQHTDSRVLESRSSEN) is disordered. A zinc finger spans residues 3 to 34 (CPHCQHTDSRVLESRSSENGQSIRRRRECLQC). Residues 7 to 18 (QHTDSRVLESRS) are compositionally biased toward basic and acidic residues. An ATP-cone domain is found at 49–139 (ITVIKKDGKR…VYGNFQGIRD (91 aa)).

This sequence belongs to the NrdR family. Zn(2+) is required as a cofactor.

Its function is as follows. Negatively regulates transcription of bacterial ribonucleotide reductase nrd genes and operons by binding to NrdR-boxes. In Microcystis aeruginosa (strain NIES-843 / IAM M-2473), this protein is Transcriptional repressor NrdR.